Reading from the N-terminus, the 333-residue chain is tRNA(Ile)-lysidine synthase (333 aa).

25 to 30 (SGGPDS) serves as a coordination point for ATP.

It belongs to the tRNA(Ile)-lysidine synthase family.

It is found in the cytoplasm. The enzyme catalyses cytidine(34) in tRNA(Ile2) + L-lysine + ATP = lysidine(34) in tRNA(Ile2) + AMP + diphosphate + H(+). Functionally, ligates lysine onto the cytidine present at position 34 of the AUA codon-specific tRNA(Ile) that contains the anticodon CAU, in an ATP-dependent manner. Cytidine is converted to lysidine, thus changing the amino acid specificity of the tRNA from methionine to isoleucine. This chain is tRNA(Ile)-lysidine synthase, found in Ureaplasma parvum serovar 3 (strain ATCC 700970).